Here is a 461-residue protein sequence, read N- to C-terminus: Carbamoyl phosphate synthase arginine-specific small chain (461 aa).

The region spanning 240-427 (HVALIDCGVK…LENVQMYKDN (188 aa)) is the Glutamine amidotransferase type-1 domain. Catalysis depends on Cys316, which acts as the Nucleophile. Residues His400 and Glu402 contribute to the active site.

It belongs to the CarA family. In terms of assembly, heterodimer composed of 2 chains; the small (or glutamine) chain promotes the hydrolysis of glutamine to ammonia, which is used by the large (or ammonia) chain to synthesize carbamoyl phosphate.

The protein resides in the cytoplasm. The catalysed reaction is hydrogencarbonate + L-glutamine + 2 ATP + H2O = carbamoyl phosphate + L-glutamate + 2 ADP + phosphate + 2 H(+). It carries out the reaction L-glutamine + H2O = L-glutamate + NH4(+). Its pathway is amino-acid biosynthesis; L-arginine biosynthesis; carbamoyl phosphate from bicarbonate: step 1/1. Its function is as follows. Small subunit of the arginine-specific carbamoyl phosphate synthase (CPSase). CPSase catalyzes the formation of carbamoyl phosphate from the ammonia moiety of glutamine, carbonate, and phosphate donated by ATP, constituting the first step of 2 biosynthetic pathways, one leading to arginine and/or urea and the other to pyrimidine nucleotides. The small subunit (glutamine amidotransferase) binds and cleaves glutamine to supply the large subunit with the substrate ammonia. This chain is Carbamoyl phosphate synthase arginine-specific small chain (CPA1), found in Chaetomium globosum (strain ATCC 6205 / CBS 148.51 / DSM 1962 / NBRC 6347 / NRRL 1970) (Soil fungus).